Here is a 367-residue protein sequence, read N- to C-terminus: Phosphoribosylaminoimidazole-succinocarboxamide synthase (367 aa).

Belongs to the SAICAR synthetase family.

The enzyme catalyses 5-amino-1-(5-phospho-D-ribosyl)imidazole-4-carboxylate + L-aspartate + ATP = (2S)-2-[5-amino-1-(5-phospho-beta-D-ribosyl)imidazole-4-carboxamido]succinate + ADP + phosphate + 2 H(+). It participates in purine metabolism; IMP biosynthesis via de novo pathway; 5-amino-1-(5-phospho-D-ribosyl)imidazole-4-carboxamide from 5-amino-1-(5-phospho-D-ribosyl)imidazole-4-carboxylate: step 1/2. The protein is Phosphoribosylaminoimidazole-succinocarboxamide synthase of Shewanella baltica (strain OS195).